Consider the following 408-residue polypeptide: Photox toxin (408 aa).

The interval 168 to 196 (NNQQHIKDSDGRKPVNNMPPPPPPPMADK) is disordered. Residues 184-193 (NMPPPPPPPM) show a composition bias toward pro residues. Residues 190-393 (PPPMADKTQK…LRLTDDASAD (204 aa)) form the TR mART core domain. Active-site residues include Arg288, Ser318, and Glu355.

It in the C-terminal section; belongs to the SpvB family.

The enzyme catalyses L-arginyl-[protein] + NAD(+) = N(omega)-(ADP-D-ribosyl)-L-arginyl-[protein] + nicotinamide + H(+). Mono-ADP-ribosylates chicken skeletal alpha-actin and human non-skeletal beta- and gamma-actin. Mono-ADP-ribosylates 'Arg-177' of yeast actin, blocking its ability to polymerize. Does not possess NAD(+)-glycohydrolase activity, unlike most mART enzymes. Upon expression in S.cerevisiae almost completely inhibits growth. This Photorhabdus laumondii subsp. laumondii (strain DSM 15139 / CIP 105565 / TT01) (Photorhabdus luminescens subsp. laumondii) protein is Photox toxin (phxA).